The sequence spans 159 residues: 2-C-methyl-D-erythritol 2,4-cyclodiphosphate synthase (159 aa).

Residues Asp8 and His10 each contribute to the a divalent metal cation site. 4-CDP-2-C-methyl-D-erythritol 2-phosphate-binding positions include 8–10 (DVH) and 34–35 (HS). His42 is a binding site for a divalent metal cation. 4-CDP-2-C-methyl-D-erythritol 2-phosphate is bound by residues 56 to 58 (DIG), 61 to 65 (FPDTD), 100 to 106 (AQAPKML), 132 to 135 (TTTE), Phe139, and Arg142.

The protein belongs to the IspF family. In terms of assembly, homotrimer. The cofactor is a divalent metal cation.

The enzyme catalyses 4-CDP-2-C-methyl-D-erythritol 2-phosphate = 2-C-methyl-D-erythritol 2,4-cyclic diphosphate + CMP. The protein operates within isoprenoid biosynthesis; isopentenyl diphosphate biosynthesis via DXP pathway; isopentenyl diphosphate from 1-deoxy-D-xylulose 5-phosphate: step 4/6. Functionally, involved in the biosynthesis of isopentenyl diphosphate (IPP) and dimethylallyl diphosphate (DMAPP), two major building blocks of isoprenoid compounds. Catalyzes the conversion of 4-diphosphocytidyl-2-C-methyl-D-erythritol 2-phosphate (CDP-ME2P) to 2-C-methyl-D-erythritol 2,4-cyclodiphosphate (ME-CPP) with a corresponding release of cytidine 5-monophosphate (CMP). The polypeptide is 2-C-methyl-D-erythritol 2,4-cyclodiphosphate synthase (Salmonella dublin (strain CT_02021853)).